We begin with the raw amino-acid sequence, 368 residues long: Phospho-N-acetylmuramoyl-pentapeptide-transferase (368 aa).

Transmembrane regions (helical) follow at residues 30–50 (AAAI…IRYL), 72–92 (LPTM…LLWS), 98–118 (HVWL…IDDY), 139–159 (VALG…SVLM), 170–190 (LTID…TALS), 208–228 (AIVV…VYAT), 238–258 (GGEI…FLWF), 264–286 (EIFM…ALLI), and 345–365 (KIVI…LMTL).

This sequence belongs to the glycosyltransferase 4 family. MraY subfamily. The cofactor is Mg(2+).

It localises to the cell inner membrane. It carries out the reaction UDP-N-acetyl-alpha-D-muramoyl-L-alanyl-gamma-D-glutamyl-meso-2,6-diaminopimeloyl-D-alanyl-D-alanine + di-trans,octa-cis-undecaprenyl phosphate = di-trans,octa-cis-undecaprenyl diphospho-N-acetyl-alpha-D-muramoyl-L-alanyl-D-glutamyl-meso-2,6-diaminopimeloyl-D-alanyl-D-alanine + UMP. It functions in the pathway cell wall biogenesis; peptidoglycan biosynthesis. Its function is as follows. Catalyzes the initial step of the lipid cycle reactions in the biosynthesis of the cell wall peptidoglycan: transfers peptidoglycan precursor phospho-MurNAc-pentapeptide from UDP-MurNAc-pentapeptide onto the lipid carrier undecaprenyl phosphate, yielding undecaprenyl-pyrophosphoryl-MurNAc-pentapeptide, known as lipid I. The sequence is that of Phospho-N-acetylmuramoyl-pentapeptide-transferase from Chlorobium luteolum (strain DSM 273 / BCRC 81028 / 2530) (Pelodictyon luteolum).